A 73-amino-acid polypeptide reads, in one-letter code: Large ribosomal subunit protein bL31 (73 aa).

This sequence belongs to the bacterial ribosomal protein bL31 family. Type A subfamily. As to quaternary structure, part of the 50S ribosomal subunit.

Its function is as follows. Binds the 23S rRNA. In Dinoroseobacter shibae (strain DSM 16493 / NCIMB 14021 / DFL 12), this protein is Large ribosomal subunit protein bL31.